We begin with the raw amino-acid sequence, 1960 residues long: MSRPRFNPRGTFPLQRPRAPNPPGMRPPGPFVRPGSMGLPRFYPAGRARGIPHRFPGHGSYQNMGPQRMNVQVTQHRTDPRLTKEKLDFPEAQQKKGKPHGSRWDDESHITPPVEVKQSSVTQVTEQSPKVQSRYTKESASSILASFGLSNEDLEELSRYPDEQLTPENMPLILRDIRMRKMSRRLPNLPSHSRNKETLSNETVSSNVIDYGHASKYGYTEDPLEVRIYDPEIPTDEVKNEFQPQQSISATVSTPNVICNSVFPGGDMFRQMDFPGESSSQSFFPVESGTKMSGLHISGQSVLEPVKSISQSISQTVSQTTSQSLNPPSMNQVPFTFELDAVLRQQERISQKSVISSADAHGGPTESKKDYQSEADLPIRSPFGIVKASWLPKFTQAGAQKMKRLPTPSMMNDYYAASPRIFPHLCSLCNVECSHLKDWIQHQNTSTHIESCRQLRQQYPDWNPEILPSRRNESNRKENETPRRRSHSPSPRHSRRSSSGHRIRRSRSPVRYIYRPRSRSPRICHRFISKYRSRSRSRSRSRSPYRSRNLLRRSPKSYRSASPERTSRKSVRSDRKKALEDGGQRSVHGTEVTKQKHTETVDKGLSPAQKPKLASGTKPSAKSLSSVKSDSHLGAYSAHKSENLEDDTLPEGKQESGKSALAQRKPQKDQSLSSNSILLVSELPEDGFTEEDIRKAFLPFGKISDVLLVPCRNEAYLEMELRKAVTSIMKYIETMPLVIKGKSVKVCVPGKKKPQNKEMKKKPSDIKKSSASALKKETDASKTMETVSSSSSAKSGQIKSSTVKVNKCAGKSAGSVKSVVTVAAKGKASIKTAKSGKKSLEAKKSGNIKNKDSNKPVTVPANSEIKASSEDKATGKSAEESPSGTLEATEKEPVNKESEEMSVVFISNLPNKGYSTEEIYNLAKPFGALKDILVLSSHKKAYIEINKKSADSMVKFYTCFPISMDGNQLSISMAPEHVDLKDEEALFTTLIQENDPEANIDKIYNRFVHLDNLPEDGLQCVLCVGHQFGKVDRYMFMSNKNKVILQLESPESALSMYNFLKQNPQNIGEHVLTCTLSPKTDSEVQRKNDLELGKGSTFSPDLKNSPVDESEVQTAADSSSVKPSEVEEETTSNIGTETSVHQEELGKEEPKQALCESDFAIQTLELEAQGAEVSIEIPLVASTPANIELFSENIDESALNQQMYTSDFEKEEAEVTNPETELAVSDSVFIEERNIKGIIEDSPSETEDIFSGIVQPMVDAIAEVDKHETVSEVLPSACNVTQAPGSYIEDEKVVSKKDIAEKVILDEKEEDEFNVKETRMDLQVKTEKAEKNEAIIFKEKLEKIIAAIREKPIESSVIKADPTKGLDQTSKPDETGKSSVLTVSNVYSSKSSIKATVVSSPKAKSTPSKTESHSTFPKPVLREQIKADKKVSAKEFGLLKNTRSGLAESNSKSKPTQIGVNRGCSGRISALQCKDSKVDYKDITKQSQETETKPPIMKRDDSNNKALALQNTKNSKSTTDRSSKSKEEPLFTFNLDEFVTVDEVIEEVNPSQAKQNPLKGKRKEALKISPSPELNLKKKKGKTSVPHSVEGELSFVTLDEIGEEEDATVQALVTVDEVIDEEELNMEEMVKNSNSLLTLDELIDQDDCIPHSGPKDVTVLSMAEEQDLQQERLVTVDEIGEVEESADITFATLNAKRDKRDSIGFISSQMPEDPSTLVTVDEIQDDSSDFHLMTLDEVTEEDENSLADFNNLKEELNFVTVDEVGDEEDGDNDSKVELARGKIEHHTDKKGNRKRRAVDPKKSKLDSFSQVGPGSETVTQKDLKTMPERHLAAKTPMKRVRLGKSSPSQKVAEPTKGEEAFQMSEGVDDAELKDSEPDEKRRKTQDSSVGKSMTSDVPGDLDFLVPKAGFFCPICSLFYSGEKAMANHCKSTRHKQNTEKFMAKQRKEKEQNETEERSSR.

The interval 1–137 (MSRPRFNPRG…SPKVQSRYTK (137 aa)) is disordered. The segment covering 19-31 (APNPPGMRPPGPF) has biased composition (pro residues). Arg-47, Arg-49, and Arg-54 each carry asymmetric dimethylarginine. A compositionally biased stretch (polar residues) spans 60–75 (SYQNMGPQRMNVQVTQ). Basic and acidic residues predominate over residues 76–89 (HRTDPRLTKEKLDF). Residues 117-137 (KQSSVTQVTEQSPKVQSRYTK) show a composition bias toward polar residues. A phosphoserine mark is found at Ser-128 and Ser-288. A Glycyl lysine isopeptide (Lys-Gly) (interchain with G-Cter in SUMO2) cross-link involves residue Lys-291. Phosphoserine is present on residues Ser-298, Ser-367, Ser-381, and Ser-418. Residues 352-373 (KSVISSADAHGGPTESKKDYQS) are disordered. 3 disordered regions span residues 463–673 (NPEI…QSLS), 749–804 (PGKK…STVK), and 827–899 (KASI…KESE). Residues 468–483 (PSRRNESNRKENETPR) show a composition bias toward basic and acidic residues. Positions 470–573 (RRNESNRKEN…ERTSRKSVRS (104 aa)) are involved in localization to nuclear speckles. A compositionally biased stretch (basic residues) spans 484 to 556 (RRSHSPSPRH…SRNLLRRSPK (73 aa)). Ser-554 bears the Phosphoserine mark. 2 stretches are compositionally biased toward basic and acidic residues: residues 565–583 (RTSR…EDGG) and 591–602 (EVTKQKHTETVD). Ser-606 and Ser-615 each carry phosphoserine. Over residues 618–628 (KPSAKSLSSVK) the composition is skewed to low complexity. Ser-637 is modified (phosphoserine). Positions 676 to 751 (SILLVSELPE…KSVKVCVPGK (76 aa)) constitute an RRM 1 domain. Over residues 755-782 (QNKEMKKKPSDIKKSSASALKKETDASK) the composition is skewed to basic and acidic residues. Lys-775 is covalently cross-linked (Glycyl lysine isopeptide (Lys-Gly) (interchain with G-Cter in SUMO2)). Residues 783–802 (TMETVSSSSSAKSGQIKSST) show a composition bias toward low complexity. Composition is skewed to basic and acidic residues over residues 838–854 (KSLE…KDSN), 867–879 (ASSE…KSAE), and 888–899 (ATEKEPVNKESE). The RRM 2 domain maps to 902 to 976 (SVVFISNLPN…NQLSISMAPE (75 aa)). Residues 1082-1092 (SEVQRKNDLEL) show a composition bias toward basic and acidic residues. Disordered stretches follow at residues 1082-1151 (SEVQ…EEPK), 1396-1420 (TVVS…PKPV), 1442-1462 (TRSG…GVNR), 1484-1527 (TKQS…KSKE), and 1550-1583 (PSQA…KGKT). Residue Ser-1099 is modified to Phosphoserine. The span at 1140 to 1151 (VHQEELGKEEPK) shows a compositional bias: basic and acidic residues. A compositionally biased stretch (low complexity) spans 1399 to 1409 (SSPKAKSTPSK). Ser-1400 bears the Phosphoserine mark. Residues 1442–1459 (TRSGLAESNSKSKPTQIG) show a composition bias toward polar residues. 2 stretches are compositionally biased toward basic and acidic residues: residues 1484-1503 (TKQS…DDSN) and 1518-1527 (TTDRSSKSKE). 2 positions are modified to phosphoserine: Ser-1635 and Ser-1661. Disordered regions lie at residues 1763–1898 (EVGD…SDVP) and 1930–1960 (KSTR…RSSR). Basic and acidic residues predominate over residues 1772–1790 (NDSKVELARGKIEHHTDKK). Lys-1804 participates in a covalent cross-link: Glycyl lysine isopeptide (Lys-Gly) (interchain with G-Cter in SUMO2). Positions 1806 to 1818 (DSFSQVGPGSETV) are enriched in polar residues. Over residues 1819 to 1831 (TQKDLKTMPERHL) the composition is skewed to basic and acidic residues. Phosphoserine is present on Ser-1864. The span at 1870–1885 (AELKDSEPDEKRRKTQ) shows a compositional bias: basic and acidic residues. The segment at 1876–1906 (EPDEKRRKTQDSSVGKSMTSDVPGDLDFLVP) adopts a Matrin-type zinc-finger fold. Residues 1886-1895 (DSSVGKSMTS) show a composition bias toward polar residues. Basic and acidic residues predominate over residues 1936 to 1960 (QNTEKFMAKQRKEKEQNETEERSSR).

In terms of assembly, interacts with FHL2. Interacts with CEBPA, CEBPD and CEBPG. Interacts with MPHOSPH8 and TASOR components of the HUSH complex; leading to recruitment of the HUSH complex. Interacts with SETDB1. Interacts with HDAC1. Interacts with HDAC4.

It is found in the nucleus speckle. Transcription factor that binds to cytidine clusters in double-stranded DNA. Plays a key role in the silencing of unintegrated retroviral DNA: some part of the retroviral DNA formed immediately after infection remains unintegrated in the host genome and is transcriptionally repressed. Mediates transcriptional repression of unintegrated viral DNA by specifically binding to the cytidine clusters of retroviral DNA and mediating the recruitment of chromatin silencers, such as the HUSH complex, SETDB1 and the histone deacetylases HDAC1 and HDAC4. Acts as an early regulator of adipogenesis by acting as a transcription cofactor of CEBPs (CEBPA, CEBPD and/or CEBPG), controlling the expression of PPARG and probably of other proadipogenic genes, such as SREBF1. May also regulate alternative splicing of target genes during adipogenesis. This Mus musculus (Mouse) protein is Zinc finger protein 638.